The sequence spans 204 residues: MPSFLRGILKPKERHHENKNHSQMSSDSLTSSYPTSPPKLEKTEAGSIVSSTTQKKTSHHAKPTITTKTEQSQRRPKIIDQVRRVESLGEQVSQKQRHMLESLINKVYTGPLGEELVQTLYLRIWAMKETPESTKILQMREDIRDQYLRMKTERWLRTLIRGKKTKLRDFQKRYEEVHPYLMIERVEQIIMEEAWKLAAHIVQE.

The interval 1-78 is disordered; the sequence is MPSFLRGILK…TEQSQRRPKI (78 aa). Over residues 10-20 the composition is skewed to basic and acidic residues; that stretch reads KPKERHHENKN. The span at 25–34 shows a compositional bias: low complexity; sequence SSDSLTSSYP.

This sequence belongs to the respirovirus protein C family.

The protein is Protein C (P/V/C) of Homo sapiens (Human).